A 632-amino-acid chain; its full sequence is Tail spike protein (632 aa).

The 126-residue stretch at 505–630 (SDARCKTEPL…KRMQEALAAL (126 aa)) folds into the Peptidase S74 domain.

As to quaternary structure, homotrimer. In terms of processing, proteolytic cleavage and release of the chaperone in the host cytosol stabilizes the folded protein. The cleavage gives rise to the mature tail spike protein but is not essential for catalytic activity.

The protein resides in the virion. Its function is as follows. Functions as a receptor binding protein (RBP) and probably mediates the attachment to the host capsular exopolysaccharides. Displays a depolymerase activity that specifically degrades the K5-type polysaccharides of Escherichia coli capsule. The C-terminal chaperone protein mediates homotrimerization and proper folding of the catalytic trimer. The polypeptide is Tail spike protein (kflA) (Escherichia virus K5 (Bacteriophage K5)).